Here is a 280-residue protein sequence, read N- to C-terminus: Putative aquaporin-10 (280 aa).

At Met-1 to Tyr-8 the chain is on the cytoplasmic side. The chain crosses the membrane as a helical span at residues Tyr-9–Ala-29. Topologically, residues Arg-30–Gly-64 are extracellular. Residues Ile-65–Ala-85 form a helical membrane-spanning segment. Residues Gly-86–Phe-114 are Cytoplasmic-facing. Residues Leu-115–Ile-135 form a helical membrane-spanning segment. At Trp-136–Gly-164 the chain is on the extracellular side. The chain crosses the membrane as a helical span at residues Ile-165–Leu-185. The Cytoplasmic portion of the chain corresponds to Ala-186–Leu-193. The chain crosses the membrane as a helical span at residues Ile-194–Leu-214. At Asn-215–Ser-233 the chain is on the extracellular side. Residues Phe-234–Gly-254 traverse the membrane as a helical segment. Topologically, residues Gln-255–Asp-280 are cytoplasmic. Positions Lys-256–Asp-280 are disordered. Over residues Ser-262 to Asp-280 the composition is skewed to basic and acidic residues.

This sequence belongs to the MIP/aquaporin (TC 1.A.8) family.

The protein resides in the membrane. The protein is Putative aquaporin-10 (aqp-10) of Caenorhabditis elegans.